Consider the following 90-residue polypeptide: Electron transfer flavoprotein regulatory factor 1 (90 aa).

The protein belongs to the complex I LYR family. In terms of assembly, homotetramer. Interacts with NDUFAB1. Interacts with ETFA. Interacts with ETFB.

It localises to the mitochondrion. Functionally, acts as a regulator of the electron transfer flavoprotein by promoting the removal of flavin from the ETF holoenzyme (composed of ETFA and ETFB). The polypeptide is Electron transfer flavoprotein regulatory factor 1 (Homo sapiens (Human)).